The sequence spans 94 residues: Pyrimidine/purine nucleoside phosphorylase (94 aa).

It belongs to the nucleoside phosphorylase PpnP family.

It catalyses the reaction a purine D-ribonucleoside + phosphate = a purine nucleobase + alpha-D-ribose 1-phosphate. It carries out the reaction adenosine + phosphate = alpha-D-ribose 1-phosphate + adenine. The catalysed reaction is cytidine + phosphate = cytosine + alpha-D-ribose 1-phosphate. The enzyme catalyses guanosine + phosphate = alpha-D-ribose 1-phosphate + guanine. It catalyses the reaction inosine + phosphate = alpha-D-ribose 1-phosphate + hypoxanthine. It carries out the reaction thymidine + phosphate = 2-deoxy-alpha-D-ribose 1-phosphate + thymine. The catalysed reaction is uridine + phosphate = alpha-D-ribose 1-phosphate + uracil. The enzyme catalyses xanthosine + phosphate = alpha-D-ribose 1-phosphate + xanthine. In terms of biological role, catalyzes the phosphorolysis of diverse nucleosides, yielding D-ribose 1-phosphate and the respective free bases. Can use uridine, adenosine, guanosine, cytidine, thymidine, inosine and xanthosine as substrates. Also catalyzes the reverse reactions. In Teredinibacter turnerae (strain ATCC 39867 / T7901), this protein is Pyrimidine/purine nucleoside phosphorylase.